The chain runs to 953 residues: MPTYFQRPENALKRANEFIEVGKKEPALDALYDVIKSKKHRTWQNKIHEPILFKYLELCVDLRRSHVAKEGLYQYKLICQQVNIASLEDVIRYFLKLAESRAVEAQEDSRKEASAELDEDVDIEDLDQIQTPESLLLSFVSGEDTQDRTDRVKLTPWVKFLWEAYRNVLELLRNNVRVEKLYHETAQQAFKFCLKYTRRTEFRKLCDNLRNHLNVTLKHQGQPNSVNLNNPDSIQMHLETRLAQLDSAISMELWQEAFKAVEDVYGLMQLSKRPPKPQVMANYYQKVALVFLKAGNFLYHACTQQRLYLLMREQKKSITSEELQKMASHVLLATLSVPIQVSLSNTEKYLELDEVAREKSKRLANLLNLQNTPTRESLLQDMLKANVLQYVNTKVHCLYQLLEKDFRPLDLCAKVNEVCQYLESCDDADLCQYIKPIQNIAVTRLLKQVSQVFQTIEFSRLMALVPFMTEFQLERMIVDIAKEKNLQVRLDHRTKSISFGLDLHVAHREEVPEGPYLQAMPSEGLRNQLTLMSVALQRSIFTIQHDHIKAKKREEQEQMAQNYLRTARKEHKLMLERKTVIEARKEYLESVMQERERREYEKIKKQKVENQEAEQKRLDEERRQREIQRRRQELQDIEKRQAMDKIAALKKTTVGAKALKDLSPEEIDNMNADDIIAKQVEQLDKEKRELQTKLKTQEKKVDYFARAMRMEEIPLLNKQYEEHLVADREFWENQEEERVRKAIEEHEKLVETSARLQRMIPDKDAFINTLRESRTEEYQAKFQAFQAKLEQVRKERLEVRRKRRIKDRKERKKIEMEEAKKREQEEKERKKEEKERIEREEREAKEREYAERIAKQNEIDRKRREKELEIERRLEERAGVGQVQQIRCLFITGWGDHEDGGDRWRDERGGDRGPDRGGDKPGAWRPKWQREEPDRGGDRWRGGDRRDGMITMS.

Residues 323 to 504 form the PCI domain; it reads LQKMASHVLL…KSISFGLDLH (182 aa). 3 coiled-coil regions span residues 593-642, 670-704, and 732-877; these read QERE…KRQA, MNADDIIAKQVEQLDKEKRELQTKLKTQEKKVDYF, and ENQE…LEER. Residues 603 to 623 are disordered; that stretch reads IKKQKVENQEAEQKRLDEERR. 2 disordered regions span residues 810–861 and 893–953; these read ERKK…EIDR and GWGD…ITMS. Basic and acidic residues-rich tracts occupy residues 812–861, 895–919, and 928–953; these read KKIE…EIDR, GDHEDGGDRWRDERGGDRGPDRGGD, and WQREEPDRGGDRWRGGDRRDGMITMS.

Belongs to the eIF-3 subunit A family. In terms of assembly, component of the eukaryotic translation initiation factor 3 (eIF-3) complex.

The protein resides in the cytoplasm. Functionally, RNA-binding component of the eukaryotic translation initiation factor 3 (eIF-3) complex, which is involved in protein synthesis of a specialized repertoire of mRNAs and, together with other initiation factors, stimulates binding of mRNA and methionyl-tRNAi to the 40S ribosome. The eIF-3 complex specifically targets and initiates translation of a subset of mRNAs involved in cell proliferation. This chain is Eukaryotic translation initiation factor 3 subunit A, found in Nematostella vectensis (Starlet sea anemone).